Here is a 375-residue protein sequence, read N- to C-terminus: Succinyl-diaminopimelate desuccinylase (375 aa).

Residue His66 coordinates Zn(2+). The active site involves Asp68. Asp99 contributes to the Zn(2+) binding site. Catalysis depends on Glu133, which acts as the Proton acceptor. Zn(2+) contacts are provided by Glu134, Glu162, and His348.

Belongs to the peptidase M20A family. DapE subfamily. Homodimer. Requires Zn(2+) as cofactor. The cofactor is Co(2+).

It catalyses the reaction N-succinyl-(2S,6S)-2,6-diaminopimelate + H2O = (2S,6S)-2,6-diaminopimelate + succinate. The protein operates within amino-acid biosynthesis; L-lysine biosynthesis via DAP pathway; LL-2,6-diaminopimelate from (S)-tetrahydrodipicolinate (succinylase route): step 3/3. In terms of biological role, catalyzes the hydrolysis of N-succinyl-L,L-diaminopimelic acid (SDAP), forming succinate and LL-2,6-diaminopimelate (DAP), an intermediate involved in the bacterial biosynthesis of lysine and meso-diaminopimelic acid, an essential component of bacterial cell walls. This chain is Succinyl-diaminopimelate desuccinylase, found in Herminiimonas arsenicoxydans.